Here is a 136-residue protein sequence, read N- to C-terminus: Antistasin (136 aa).

The signal sequence occupies residues 1 to 17; the sequence is MIKLAILLLFTVAIVRC. At Gln-18 the chain carries Pyrrolidone carboxylic acid. Disulfide bonds link Cys-25–Cys-36, Cys-30–Cys-43, Cys-45–Cys-65, Cys-50–Cys-68, Cys-54–Cys-70, Cys-79–Cys-90, Cys-84–Cys-97, Cys-99–Cys-120, Cys-105–Cys-123, and Cys-109–Cys-125. The Antistasin-like 1 domain occupies 45 to 70; the sequence is CSGVRCRMHCPHGFQRSRYGCEFCKC. An Antistasin-like 2 domain is found at 100 to 125; that stretch reads KIDINCRKTCPNGLKRDKLGCEYCEC. Residues 114-117 and 128-135 contribute to the heparin site; these read KRDK and KRKLIPRL.

Belongs to the protease inhibitor I15 (antistasin) family.

The protein localises to the secreted. In terms of biological role, this highly disulfide-bonded protein is a potent inhibitor of factor Xa. May have therapeutic utility as an anticoagulant. Also exhibits a strong metastatic activity. The chain is Antistasin from Haementeria officinalis (Mexican leech).